A 166-amino-acid polypeptide reads, in one-letter code: Large ribosomal subunit protein uL10 (166 aa).

It belongs to the universal ribosomal protein uL10 family. As to quaternary structure, part of the ribosomal stalk of the 50S ribosomal subunit. The N-terminus interacts with L11 and the large rRNA to form the base of the stalk. The C-terminus forms an elongated spine to which L12 dimers bind in a sequential fashion forming a multimeric L10(L12)X complex.

Forms part of the ribosomal stalk, playing a central role in the interaction of the ribosome with GTP-bound translation factors. The polypeptide is Large ribosomal subunit protein uL10 (Azotobacter vinelandii (strain DJ / ATCC BAA-1303)).